We begin with the raw amino-acid sequence, 908 residues long: UPF0182 protein Csac_0864 (908 aa).

7 consecutive transmembrane segments (helical) span residues 22–42 (FVIS…DLFL), 62–82 (FYVK…VFFV), 98–118 (ISLL…ALIA), 166–186 (FLFY…IVLY), 208–228 (HIFF…KYEM), 253–273 (YFRL…YFFI), and 286–306 (SYIG…YFVV).

Belongs to the UPF0182 family.

The protein resides in the cell membrane. The chain is UPF0182 protein Csac_0864 from Caldicellulosiruptor saccharolyticus (strain ATCC 43494 / DSM 8903 / Tp8T 6331).